The following is a 474-amino-acid chain: Protein IFIT1 homolog B (474 aa).

TPR repeat units follow at residues Val52–Glu85, Leu95–Phe128, Val141–Asn174, Ala182–Asp216, Tyr218–Gln250, Ala251–Ser284, Ala305–Phe339, Glu340–Glu373, Gln378–Ser412, and Val437–Leu470.

The protein belongs to the IFIT family.

IFIT1B is likely non-functional, lacking the critical antiviral role of IFIT1. Unlike IFIT1, which is essential in the innate immune response as part of an interferon-dependent multiprotein complex, IFIT1B does not prevent the translation of viral RNAs that lack host-specific 2'-O-methylation at their 5' cap. Consequently, it probably cannot inhibit their translation by competing with the host translation machinery. The protein is Protein IFIT1 homolog B of Homo sapiens (Human).